Here is a 772-residue protein sequence, read N- to C-terminus: Protein transport protein SEC23 F (772 aa).

Residues cysteine 65, cysteine 68, cysteine 87, and cysteine 90 each contribute to the Zn(2+) site. Positions 65–90 (CKTCKALLNAFARVDFAAMNWVCPFC) are zinc finger-like.

This sequence belongs to the SEC23/SEC24 family. SEC23 subfamily. Component of the coat protein complex II (COPII), composed of at least five proteins: the Sec23/24 complex, the Sec13/31 complex and Sar1. Interacts with SEC24A.

Its subcellular location is the cytoplasmic vesicle. It is found in the COPII-coated vesicle membrane. The protein resides in the endoplasmic reticulum membrane. The protein localises to the membrane. In terms of biological role, component of the coat protein complex II (COPII) which promotes the formation of transport vesicles from the endoplasmic reticulum (ER). The coat has two main functions, the physical deformation of the endoplasmic reticulum membrane into vesicles and the selection of cargo molecules. The chain is Protein transport protein SEC23 F from Arabidopsis thaliana (Mouse-ear cress).